The chain runs to 253 residues: Phosphate import ATP-binding protein PstB (253 aa).

Positions 7–248 (IEVEDLNVYF…PRDKRTEDYI (242 aa)) constitute an ABC transporter domain. 39 to 46 (GPSGCGKS) is an ATP binding site.

The protein belongs to the ABC transporter superfamily. Phosphate importer (TC 3.A.1.7) family. In terms of assembly, the complex is composed of two ATP-binding proteins (PstB), two transmembrane proteins (PstC and PstA) and a solute-binding protein (PstS).

Its subcellular location is the cell membrane. The catalysed reaction is phosphate(out) + ATP + H2O = ADP + 2 phosphate(in) + H(+). Its function is as follows. Part of the ABC transporter complex PstSACB involved in phosphate import. Responsible for energy coupling to the transport system. This is Phosphate import ATP-binding protein PstB from Methanothermobacter thermautotrophicus (strain ATCC 29096 / DSM 1053 / JCM 10044 / NBRC 100330 / Delta H) (Methanobacterium thermoautotrophicum).